Reading from the N-terminus, the 352-residue chain is Glycerol-1-phosphate dehydrogenase [NAD(P)+] (352 aa).

NAD(+) contacts are provided by residues 98–102 (GKAID) and 120–123 (TAAS). Residue Asp125 participates in substrate binding. Residue Ser129 coordinates NAD(+). Asp172 lines the substrate pocket. The Zn(2+) site is built by Asp172 and His252. A substrate-binding site is contributed by His256. Zn(2+) is bound at residue His268.

Belongs to the glycerol-1-phosphate dehydrogenase family. Zn(2+) serves as cofactor.

The protein resides in the cytoplasm. The catalysed reaction is sn-glycerol 1-phosphate + NAD(+) = dihydroxyacetone phosphate + NADH + H(+). The enzyme catalyses sn-glycerol 1-phosphate + NADP(+) = dihydroxyacetone phosphate + NADPH + H(+). Its pathway is membrane lipid metabolism; glycerophospholipid metabolism. Its function is as follows. Catalyzes the NAD(P)H-dependent reduction of dihydroxyacetonephosphate (DHAP or glycerone phosphate) to glycerol 1-phosphate (G1P). The G1P thus generated is used as the glycerophosphate backbone of phospholipids in the cellular membranes of Archaea. In Halobacterium salinarum (strain ATCC 29341 / DSM 671 / R1), this protein is Glycerol-1-phosphate dehydrogenase [NAD(P)+].